Reading from the N-terminus, the 450-residue chain is UPF0210 protein CPE1497 (450 aa).

The protein belongs to the UPF0210 family. In terms of assembly, homodimer.

In Clostridium perfringens (strain 13 / Type A), this protein is UPF0210 protein CPE1497.